A 177-amino-acid chain; its full sequence is Large ribosomal subunit protein uL6 (177 aa).

This sequence belongs to the universal ribosomal protein uL6 family. As to quaternary structure, part of the 50S ribosomal subunit.

Functionally, this protein binds to the 23S rRNA, and is important in its secondary structure. It is located near the subunit interface in the base of the L7/L12 stalk, and near the tRNA binding site of the peptidyltransferase center. The chain is Large ribosomal subunit protein uL6 from Sodalis glossinidius (strain morsitans).